The primary structure comprises 482 residues: Putative metallophosphoesterase F40B5.2 (482 aa).

4 helical membrane-spanning segments follow: residues 15-35 (MNLKLKIAIIVIGFIHVSIAI), 129-149 (ALMMLFLFLSHIAMFFYYIFL), 156-176 (IAITSLSFIAAYAHILIFLLI), and 205-225 (CYHILLALILGFIFMFAGLYT). A divalent metal cation contacts are provided by Asp-256, His-258, Asp-288, Asn-319, His-421, and His-423.

It belongs to the metallophosphoesterase superfamily. LOC643853 family.

The protein localises to the membrane. The polypeptide is Putative metallophosphoesterase F40B5.2 (Caenorhabditis elegans).